A 759-amino-acid chain; its full sequence is Xaa-Pro dipeptidyl-peptidase (759 aa).

Catalysis depends on charge relay system residues S347, D467, and H497.

It belongs to the peptidase S15 family. In terms of assembly, homodimer.

It localises to the secreted. It carries out the reaction Hydrolyzes Xaa-Pro-|- bonds to release unblocked, N-terminal dipeptides from substrates including Ala-Pro-|-p-nitroanilide and (sequentially) Tyr-Pro-|-Phe-Pro-|-Gly-Pro-|-Ile.. Its function is as follows. Removes N-terminal dipeptides sequentially from polypeptides having unsubstituted N-termini provided that the penultimate residue is proline. In Streptococcus gordonii, this protein is Xaa-Pro dipeptidyl-peptidase (pepX).